The chain runs to 282 residues: Putative 4-diphosphocytidyl-2-C-methyl-D-erythritol kinase (282 aa).

Residue lysine 9 is part of the active site. 93–103 serves as a coordination point for ATP; that stretch reads PVSAGLAGGSA. Aspartate 135 is a catalytic residue.

This sequence belongs to the GHMP kinase family. IspE subfamily.

It carries out the reaction 4-CDP-2-C-methyl-D-erythritol + ATP = 4-CDP-2-C-methyl-D-erythritol 2-phosphate + ADP + H(+). In terms of biological role, catalyzes the phosphorylation of the position 2 hydroxy group of 4-diphosphocytidyl-2C-methyl-D-erythritol. The protein is Putative 4-diphosphocytidyl-2-C-methyl-D-erythritol kinase of Staphylococcus aureus (strain MRSA252).